A 465-amino-acid polypeptide reads, in one-letter code: FAD-dependent monooxygenase penM (465 aa).

Residues 5–25 (QFHVIIVGGSIAGLTLAHCLH) form a helical membrane-spanning segment. FAD is bound by residues Glu35, Gly49, Arg108, Asp299, and Ala312. Residues 435 to 455 (VLVLLLSALTWSCLGNMNIIM) form a helical membrane-spanning segment.

Belongs to the paxM FAD-dependent monooxygenase family. FAD serves as cofactor.

The protein localises to the membrane. The protein operates within secondary metabolite biosynthesis. Its function is as follows. FAD-dependent monooxygenase; part of the gene cluster that mediates the biosynthesis of the indole diterpenes penitrems. The geranylgeranyl diphosphate (GGPP) synthase penG catalyzes the first step in penitrem biosynthesis via conversion of farnesyl pyrophosphate and isopentyl pyrophosphate into geranylgeranyl pyrophosphate (GGPP). Condensation of indole-3-glycerol phosphate with GGPP by the prenyl transferase penC then forms 3-geranylgeranylindole (3-GGI). Epoxidation by the FAD-dependent monooxygenase penM leads to a epoxidized-GGI that is substrate of the terpene cyclase penB for cyclization to yield paspaline. Paspaline is subsequently converted to 13-desoxypaxilline by the cytochrome P450 monooxygenase penP, the latter being then converted to paxilline by the cytochrome P450 monooxygenase penQ. Paxilline is converted to beta-paxitriol via C-10 ketoreduction by the short-chain dehydrogenase PC-15 which can be monoprenylated at the C-20 by the indole diterpene prenyltransferase penD. A two-step elimination (acetylation and elimination) process performed by the O-acetyltransferase PC-16 and the P.simplicissimum ptmI-ortholog not yet identified in P.crustosum, leads to the production of the prenylated form of penijanthine. The FAD-linked oxidoreductase ptmO then converts the prenylated form of penijanthine into PC-M5 which is in turn transformed into PC-M4 by the aromatic dimethylallyltransferase PC-22. A series of oxidation steps involving 4 cytochrome P450 monooxygenases (PC-21, PC-05, PC-23, PC-20) and a FAD-dependent monooxygenase (PC-14) are required for the transformation of PC-M4 to penitrems A and E. Synthesis of these final products is proposed to proceed via penitrems D and C (PC-21, PC-05, PC-14) and penitrems B and F (PC-21, PC-05, PC-14, PC-23). The sequence is that of FAD-dependent monooxygenase penM from Penicillium crustosum (Blue mold fungus).